Here is a 786-residue protein sequence, read N- to C-terminus: Keratin, type I cytoskeletal 9 (786 aa).

The interval 1-21 is disordered; that stretch reads MNCRQFLSSHCSRDSSGGGGG. The tract at residues 1 to 136 is head; sequence MNCRQFLSSH…SGAGGILGAD (136 aa). Ser-52 is subject to Phosphoserine. Residues 137-172 form a coil 1A region; that stretch reads EKTTMQDLNSRLASYLDKVQALEDANKELESKIREW. In terms of domain architecture, IF rod spans 137–449; sequence EKTTMQDLNS…SLLEGGQEDF (313 aa). The tract at residues 173-191 is linker 1; sequence YDKQGSRTFHRDYSPYYDT. Residues 192 to 283 are coil 1B; sequence IEDLKNQIVN…KNHEDEMSQL (92 aa). The segment at 284–306 is linker 12; that stretch reads TGQNSGDVNVEMNAAPGRDLTKI. The segment at 307–445 is coil 2; the sequence is LNDMREEYER…KTYRSLLEGG (139 aa). The tail stretch occupies residues 446 to 760; the sequence is QEDFESHESG…GGGSGSKGGS (315 aa). Residues 447–786 are disordered; that stretch reads EDFESHESGQ…DDTQGYHIQY (340 aa). 2 stretches are compositionally biased toward gly residues: residues 460 to 657 and 664 to 761; these read GSGG…GGSG and SSSG…GGSG. The segment covering 762–773 has biased composition (low complexity); sequence RSSQVQSSSSKS.

This sequence belongs to the intermediate filament family. In terms of assembly, heterotetramer of two type I and two type II keratins.

Functionally, may serve an important special function either in the mature palmar and plantar skin tissue or in the morphogenetic program of the formation of these tissues. Plays a role in keratin filament assembly. The sequence is that of Keratin, type I cytoskeletal 9 from Canis lupus familiaris (Dog).